Consider the following 488-residue polypeptide: MELDSENKLLKTGLVIVATLVIAKLIFSFFTSDSKKKRLPPTLKAWPPLVGSLIKFLKGPIIMLREEYPKLGSVFTVNLVHKKITFLIGPEVSAHFFKASESDLSQQEVYQFNVPTFGPGVVFDVDYSVRQEQFRFFTEALRVNKLKGYVDMMVTEAEDYFSKWGESGEVDIKVELERLIILTASRCLLGREVRDQLFDDVSALFHDLDNGMLPISVLFPYLPIPAHRRRDRAREKLSEIFAKIIGSRKRSGKTENDMLQCFIESKYKDGRQTTESEVTGLLIAALFAGQHTSSITSTWTGAYLMRYKEYFSAALDEQKNLIAKHGDKIDHDILSEMDVLYRCIKEALRLHPPLIMLMRASHSDFSVTARDGKTYDIPKGHIVATSPAFANRLPHIFKDPDTYDPERFSPGREEDKAAGAFSYIAFGGGRHGCLGEPFAYLQIKAIWSHLLRNFELELVSPFPEIDWNAMVVGVKGNVMVRYKRRQLS.

A helical membrane pass occupies residues 12 to 32 (TGLVIVATLVIAKLIFSFFTS). Cys433 lines the heme pocket.

Belongs to the cytochrome P450 family. Heme is required as a cofactor. In terms of tissue distribution, expressed in leaves, roots, stems, siliques, flowers, flower buds and seedlings.

The protein localises to the membrane. It carries out the reaction a 14alpha-methyl steroid + 3 reduced [NADPH--hemoprotein reductase] + 3 O2 = a Delta(14) steroid + formate + 3 oxidized [NADPH--hemoprotein reductase] + 4 H2O + 4 H(+). Functionally, involved in sterol biosynthesis. Catalyzes the 14-alpha demethylation of obtusifoliol to 4 alpha-methyl-5 alpha-ergosta-8,14,24(28)-trien-3 beta-ol. This is Sterol 14-demethylase (CYP51G1) from Arabidopsis thaliana (Mouse-ear cress).